Reading from the N-terminus, the 91-residue chain is Tityustoxin-19 (91 aa).

An N-terminal signal peptide occupies residues 1-25; the sequence is MVATNRCCVFALLFALLLVHSLTEA. A BetaSPN-type CS-alpha/beta domain is found at 58 to 91; the sequence is EYACPAIDKFCEDHCAAKKAVGKCDDFKCNCIKL. 3 disulfides stabilise this stretch: Cys61-Cys81, Cys68-Cys86, and Cys72-Cys88.

It belongs to the long chain scorpion toxin family. Class 2 subfamily. In terms of tissue distribution, expressed by the venom gland.

The protein resides in the secreted. Its function is as follows. May function as a voltage-gated potassium channel blocker and may have cytolytic activity. Is often not detected in the tested venom fractions, suggesting that the toxin is likely subject to frequent processing within the venom. Functionally, specific and reversible blocker of the potassium channel Kv1.2/KCNA2 (IC(50)=544 nM). Shows cytolytic effects on erythrocytes and induces non-selective pore formation when high concentrations (300 nM) are applied on oocytes. In terms of biological role, does not cause hemolysis, mast cell degranulation, LDH release, and does not have antimicrobial activity. Does not cause edema and pain. In Tityus serrulatus (Brazilian scorpion), this protein is Tityustoxin-19.